A 258-amino-acid polypeptide reads, in one-letter code: Ferredoxin--NADP reductase (258 aa).

The FAD-binding FR-type domain occupies 2 to 102; the sequence is SNLNVERVLS…RKPTGTLVTS (101 aa). Position 17 (Asp-17) interacts with NADP(+). FAD contacts are provided by residues 51–54, 67–69, 74–77, and Thr-117; these read RAYS, FSI, and GPLT. Residues 144–145, 181–182, and Arg-190 each bind NADP(+); these read VR and TR. 254–258 is a binding site for FAD; it reads AFVEK.

The protein belongs to the ferredoxin--NADP reductase type 1 family. Monomer. FAD is required as a cofactor.

The catalysed reaction is 2 reduced [2Fe-2S]-[ferredoxin] + NADP(+) + H(+) = 2 oxidized [2Fe-2S]-[ferredoxin] + NADPH. Transports electrons between ferredoxin and NADPH. The protein is Ferredoxin--NADP reductase of Azotobacter vinelandii.